A 175-amino-acid chain; its full sequence is Ribosome maturation factor RimM (175 aa).

The PRC barrel domain maps to 96-175 (DGDYYWKDLI…IIKVDWDPEF (80 aa)).

The protein belongs to the RimM family. In terms of assembly, binds ribosomal protein uS19.

The protein resides in the cytoplasm. Its function is as follows. An accessory protein needed during the final step in the assembly of 30S ribosomal subunit, possibly for assembly of the head region. Essential for efficient processing of 16S rRNA. May be needed both before and after RbfA during the maturation of 16S rRNA. It has affinity for free ribosomal 30S subunits but not for 70S ribosomes. The sequence is that of Ribosome maturation factor RimM from Baumannia cicadellinicola subsp. Homalodisca coagulata.